The following is a 25-amino-acid chain: U11-ctenitoxin-Co1b (25 aa).

2 disulfides stabilise this stretch: cysteine 4/cysteine 18 and cysteine 11/cysteine 22.

As to quaternary structure, monomer. As to expression, expressed by the venom gland.

It localises to the secreted. In terms of biological role, neurotoxin. This chain is U11-ctenitoxin-Co1b, found in Ctenus ornatus (Brazilian spider).